The primary structure comprises 59 residues: Chromatin protein Cren7 (59 aa).

It belongs to the Cren7 family. In terms of assembly, monomer. In terms of processing, methylated at multiple sites, to varying extents.

It localises to the chromosome. Its subcellular location is the cytoplasm. A chromatin protein, binds double-stranded DNA without sequence specificity. Constrains negative DNA supercoils. The protein is Chromatin protein Cren7 of Pyrobaculum neutrophilum (strain DSM 2338 / JCM 9278 / NBRC 100436 / V24Sta) (Thermoproteus neutrophilus).